The chain runs to 404 residues: Serine palmitoyltransferase (404 aa).

Pyridoxal 5'-phosphate is bound by residues 112–113 (GY), S185, H213, and T241. K244 bears the N6-(pyridoxal phosphate)lysine mark.

The protein belongs to the class-II pyridoxal-phosphate-dependent aminotransferase family. It depends on pyridoxal 5'-phosphate as a cofactor.

It localises to the cytoplasm. The enzyme catalyses L-serine + hexadecanoyl-CoA + H(+) = 3-oxosphinganine + CO2 + CoA. Its pathway is lipid metabolism; sphingolipid metabolism. Involved in de novo bacterial ceramide synthesis. Catalyzes the condensation of L-serine with palmitoyl-CoA (hexadecanoyl-CoA) to produce 3-oxosphinganine. Can also condense serine and C16:1-CoA, but shows a preference for palmitoyl-CoA. The chain is Serine palmitoyltransferase from Caulobacter vibrioides (strain NA1000 / CB15N) (Caulobacter crescentus).